The chain runs to 95 residues: Large ribosomal subunit protein bL27 (95 aa).

A propeptide spanning residues Met1–Phe6 is cleaved from the precursor. The interval Met1–Arg25 is disordered.

Belongs to the bacterial ribosomal protein bL27 family. The N-terminus is cleaved by ribosomal processing cysteine protease Prp.

The polypeptide is Large ribosomal subunit protein bL27 (Thermoanaerobacter pseudethanolicus (strain ATCC 33223 / 39E) (Clostridium thermohydrosulfuricum)).